Consider the following 357-residue polypeptide: tRNA-specific 2-thiouridylase MnmA (357 aa).

ATP-binding positions include 10–17 (GISGGVDS) and I36. The active-site Nucleophile is the C98. A disulfide bond links C98 and C194. G122 provides a ligand contact to ATP. The interval 144 to 146 (KDQ) is interaction with tRNA. C194 acts as the Cysteine persulfide intermediate in catalysis. The segment at 303–304 (RY) is interaction with tRNA.

Belongs to the MnmA/TRMU family.

It localises to the cytoplasm. The enzyme catalyses S-sulfanyl-L-cysteinyl-[protein] + uridine(34) in tRNA + AH2 + ATP = 2-thiouridine(34) in tRNA + L-cysteinyl-[protein] + A + AMP + diphosphate + H(+). In terms of biological role, catalyzes the 2-thiolation of uridine at the wobble position (U34) of tRNA, leading to the formation of s(2)U34. The chain is tRNA-specific 2-thiouridylase MnmA from Chlorobium phaeovibrioides (strain DSM 265 / 1930) (Prosthecochloris vibrioformis (strain DSM 265)).